Here is a 484-residue protein sequence, read N- to C-terminus: HSPB1-associated protein 1 (484 aa).

The disordered stretch occupies residues 1–26 (MAARPGAITNADSASGGGEEEGKHVK). Residues 88 to 208 (ETACNYVEAT…EDTPFLYPTR (121 aa)) are interaction with HSPB1. In terms of domain architecture, JmjC spans 124-288 (WAYADYKYFV…HQTRVEEAIT (165 aa)). The segment at 396–429 (TPSSEEPSSERGGIFENDGEDFVSKNGKSFGKRQ) is disordered.

In terms of assembly, interacts with CRYAB and HSPB1.

It is found in the cytoplasm. May play a role in cellular stress response. The chain is HSPB1-associated protein 1 (HSPBAP1) from Bos taurus (Bovine).